Consider the following 118-residue polypeptide: Basic phospholipase A2 PA-10A (118 aa).

Disulfide bonds link C11/C71, C27/C117, C29/C45, C44/C98, C51/C91, C60/C84, and C78/C89. Y28, G30, and G32 together coordinate Ca(2+). The active site involves H48. D49 is a binding site for Ca(2+). Residue D92 is part of the active site.

It belongs to the phospholipase A2 family. Group I subfamily. D49 sub-subfamily. It depends on Ca(2+) as a cofactor. In terms of tissue distribution, expressed by the venom gland.

The protein resides in the secreted. The enzyme catalyses a 1,2-diacyl-sn-glycero-3-phosphocholine + H2O = a 1-acyl-sn-glycero-3-phosphocholine + a fatty acid + H(+). Its function is as follows. PLA2 catalyzes the calcium-dependent hydrolysis of the 2-acyl groups in 3-sn-phosphoglycerides. In Pseudechis australis (Mulga snake), this protein is Basic phospholipase A2 PA-10A.